A 712-amino-acid polypeptide reads, in one-letter code: Effector protein HopM1 (712 aa).

The tract at residues 22–58 is disordered; sequence DTVPAQTAHPNAVTAGMNPPLTPDQSGSHATESSSAG. Positions 44-57 are enriched in polar residues; it reads PDQSGSHATESSSA.

In terms of assembly, interacts with the chaperone ShcM. Interacts with host plant BIG5/ATMIN7.

Its subcellular location is the secreted. The protein localises to the host membrane. Its function is as follows. Involved in the suppression of basal resistance and promotion of disease symptoms in plants. Mediates the ubiquitination and degradation, via the host proteasome, of a low-abundance immunity-associated protein in Arabidopsis thaliana. May be involved in the inhibition of a host vesicle trafficking pathway. The polypeptide is Effector protein HopM1 (hopM1) (Pseudomonas syringae pv. tomato (strain ATCC BAA-871 / DC3000)).